We begin with the raw amino-acid sequence, 261 residues long: Triosephosphate isomerase (261 aa).

Residue 10–12 participates in substrate binding; the sequence is NWK. H100 functions as the Electrophile in the catalytic mechanism. E172 (proton acceptor) is an active-site residue. Substrate contacts are provided by residues G178, S218, and 239 to 240; that span reads GG.

Belongs to the triosephosphate isomerase family. As to quaternary structure, homodimer.

It localises to the cytoplasm. The enzyme catalyses D-glyceraldehyde 3-phosphate = dihydroxyacetone phosphate. It participates in carbohydrate biosynthesis; gluconeogenesis. Its pathway is carbohydrate degradation; glycolysis; D-glyceraldehyde 3-phosphate from glycerone phosphate: step 1/1. Functionally, involved in the gluconeogenesis. Catalyzes stereospecifically the conversion of dihydroxyacetone phosphate (DHAP) to D-glyceraldehyde-3-phosphate (G3P). In Mycobacterium marinum (strain ATCC BAA-535 / M), this protein is Triosephosphate isomerase.